The primary structure comprises 328 residues: 7,8-didemethyl-8-hydroxy-5-deazariboflavin synthase (328 aa).

The region spanning 1–242 (MTYSRNIFIP…PDVSIQVPPN (242 aa)) is the Radical SAM core domain. [4Fe-4S] cluster is bound by residues Cys-15, Cys-19, and Cys-22.

Belongs to the radical SAM superfamily. CofG family. As to quaternary structure, consists of two subunits, CofG and CofH. It depends on [4Fe-4S] cluster as a cofactor.

The enzyme catalyses 5-amino-5-(4-hydroxybenzyl)-6-(D-ribitylimino)-5,6-dihydrouracil + S-adenosyl-L-methionine = 7,8-didemethyl-8-hydroxy-5-deazariboflavin + 5'-deoxyadenosine + L-methionine + NH4(+) + H(+). It functions in the pathway cofactor biosynthesis; coenzyme F0 biosynthesis. In terms of biological role, catalyzes the radical-mediated synthesis of 7,8-didemethyl-8-hydroxy-5-deazariboflavin from 5-amino-5-(4-hydroxybenzyl)-6-(D-ribitylimino)-5,6-dihydrouracil. The chain is 7,8-didemethyl-8-hydroxy-5-deazariboflavin synthase from Methanothermobacter thermautotrophicus (strain ATCC 29096 / DSM 1053 / JCM 10044 / NBRC 100330 / Delta H) (Methanobacterium thermoautotrophicum).